Consider the following 209-residue polypeptide: Ribosomal RNA large subunit methyltransferase E (209 aa).

S-adenosyl-L-methionine is bound by residues G63, W65, D83, D99, and D124. Catalysis depends on K164, which acts as the Proton acceptor.

The protein belongs to the class I-like SAM-binding methyltransferase superfamily. RNA methyltransferase RlmE family.

The protein resides in the cytoplasm. The enzyme catalyses uridine(2552) in 23S rRNA + S-adenosyl-L-methionine = 2'-O-methyluridine(2552) in 23S rRNA + S-adenosyl-L-homocysteine + H(+). In terms of biological role, specifically methylates the uridine in position 2552 of 23S rRNA at the 2'-O position of the ribose in the fully assembled 50S ribosomal subunit. This is Ribosomal RNA large subunit methyltransferase E from Colwellia psychrerythraea (strain 34H / ATCC BAA-681) (Vibrio psychroerythus).